A 403-amino-acid polypeptide reads, in one-letter code: RNA-binding motif, single-stranded-interacting protein 1 (403 aa).

Residues 30–56 (PAHPMAPPSPSTTSSNNNSSSSSNSGW) form a disordered region. Positions 40 to 54 (STTSSNNNSSSSSNS) are enriched in low complexity. RRM domains lie at 62–135 (TNLY…MAKQ) and 141–226 (TNLY…FADG). A Phosphothreonine modification is found at Thr-208.

The protein localises to the nucleus. Functionally, single-stranded DNA binding protein that interacts with the region upstream of the MYC gene. Binds specifically to the DNA sequence motif 5'-[AT]CT[AT][AT]T-3'. Probably has a role in DNA replication. The protein is RNA-binding motif, single-stranded-interacting protein 1 of Rattus norvegicus (Rat).